The sequence spans 129 residues: Small ribosomal subunit protein uS11 (129 aa).

This sequence belongs to the universal ribosomal protein uS11 family. Part of the 30S ribosomal subunit. Interacts with proteins S7 and S18. Binds to IF-3.

Functionally, located on the platform of the 30S subunit, it bridges several disparate RNA helices of the 16S rRNA. Forms part of the Shine-Dalgarno cleft in the 70S ribosome. The chain is Small ribosomal subunit protein uS11 from Aromatoleum aromaticum (strain DSM 19018 / LMG 30748 / EbN1) (Azoarcus sp. (strain EbN1)).